Reading from the N-terminus, the 89-residue chain is Small ribosomal subunit protein uS15 (89 aa).

This sequence belongs to the universal ribosomal protein uS15 family. As to quaternary structure, part of the 30S ribosomal subunit. Forms a bridge to the 50S subunit in the 70S ribosome, contacting the 23S rRNA.

Functionally, one of the primary rRNA binding proteins, it binds directly to 16S rRNA where it helps nucleate assembly of the platform of the 30S subunit by binding and bridging several RNA helices of the 16S rRNA. Its function is as follows. Forms an intersubunit bridge (bridge B4) with the 23S rRNA of the 50S subunit in the ribosome. The chain is Small ribosomal subunit protein uS15 from Thermobifida fusca (strain YX).